The following is a 277-amino-acid chain: Putative protein-disulfide oxidoreductase RC0029 (277 aa).

The signal sequence occupies residues 1-22 (MRSIFIILIFLLFLSSCSEEKA). A disordered region spans residues 34-80 (EHETQNNETSKATNQEAVNSENTTESIVPANDNNQTDEVSTPASQKQ). The span at 39–80 (NNETSKATNQEAVNSENTTESIVPANDNNQTDEVSTPASQKQ) shows a compositional bias: polar residues. The region spanning 76–265 (ASQKQKNPAI…ISTAVDKALE (190 aa)) is the Thioredoxin domain. An intrachain disulfide couples Cys-118 to Cys-121.

The protein belongs to the thioredoxin family. DsbA subfamily.

The protein resides in the periplasm. Functionally, may be required for disulfide bond formation in some proteins. The polypeptide is Putative protein-disulfide oxidoreductase RC0029 (Rickettsia conorii (strain ATCC VR-613 / Malish 7)).